The following is a 449-amino-acid chain: Na(+)-translocating NADH-quinone reductase subunit A (449 aa).

Belongs to the NqrA family. Composed of six subunits; NqrA, NqrB, NqrC, NqrD, NqrE and NqrF.

It carries out the reaction a ubiquinone + n Na(+)(in) + NADH + H(+) = a ubiquinol + n Na(+)(out) + NAD(+). Functionally, NQR complex catalyzes the reduction of ubiquinone-1 to ubiquinol by two successive reactions, coupled with the transport of Na(+) ions from the cytoplasm to the periplasm. NqrA to NqrE are probably involved in the second step, the conversion of ubisemiquinone to ubiquinol. The polypeptide is Na(+)-translocating NADH-quinone reductase subunit A (Serratia proteamaculans (strain 568)).